The primary structure comprises 208 residues: N-(5'-phosphoribosyl)anthranilate isomerase (208 aa).

Belongs to the TrpF family.

The enzyme catalyses N-(5-phospho-beta-D-ribosyl)anthranilate = 1-(2-carboxyphenylamino)-1-deoxy-D-ribulose 5-phosphate. Its pathway is amino-acid biosynthesis; L-tryptophan biosynthesis; L-tryptophan from chorismate: step 3/5. The sequence is that of N-(5'-phosphoribosyl)anthranilate isomerase from Desulforamulus reducens (strain ATCC BAA-1160 / DSM 100696 / MI-1) (Desulfotomaculum reducens).